Here is a 561-residue protein sequence, read N- to C-terminus: Rho guanine nucleotide exchange factor 9 (561 aa).

The SH3 domain maps to Asp-53–Asn-112. The interval Arg-145–Glu-155 is interaction with GPHN. Residues Met-148 to Arg-332 form the DH domain. Residues Glu-363–Lys-470 form the PH domain. The tract at residues Lys-499 to Gln-524 is disordered. Residue Ser-547 is modified to Phosphoserine.

As to quaternary structure, interacts with GPHN.

Its subcellular location is the cytoplasm. The protein resides in the postsynaptic density. Functionally, acts as a guanine nucleotide exchange factor (GEF) for CDC42. Promotes formation of GPHN clusters. The protein is Rho guanine nucleotide exchange factor 9 (ARHGEF9) of Bos taurus (Bovine).